We begin with the raw amino-acid sequence, 260 residues long: MAHCMESALLLLLLLGSASFTDGNRCVDAAEACTADERCQQLRSEYVARCLGRAAPGGRPGPGGCVRSRCRRALRRFFARGPPALTHALLFCGCEGSACAERRRQTFAPACAFSGPGLVPPSCLEPLERCERSRLCRPRLLAFQASCAPAPGSRDRCPEEGGPRCLRVYAGLIGTVVTPNYLDNVSARVAPWCGCAASGNRREECEAFRKLFTRNPCLDGAIQAFDSLQPSVLQDQTAGCCFPRVSWLYALTALALQALL.

Positions 1-23 are cleaved as a signal peptide; the sequence is MAHCMESALLLLLLLGSASFTDG. A glycan (N-linked (GlcNAc...) asparagine) is linked at asparagine 184. A lipid anchor (GPI-anchor amidated threonine) is attached at threonine 237. Residues 238-260 constitute a propeptide, removed in mature form; sequence AGCCFPRVSWLYALTALALQALL.

Belongs to the GDNFR family. In terms of assembly, interacts with ARTN ligand and RET: forms a 2:2:2 ternary complex composed of ARTN ligand, GFRA3 and RET receptor. Interacts with SORL1. Expressed in many tissues including adrenal medulla, brain neurons, with highest levels in the cerebral cortex and hippocampus. Moderate levels found in the gut circular muscle and myenteric ganglia as well as in other peripheral ganglia, including the sensory dorsal root and trigeminal as well as superior cervical and sympathetic chain ganglia. Isoform a1, isoform a2, isoform b1 and isoform b2 are exclusively found in the thyroid, parthyroid and pituitary glands.

The protein localises to the cell membrane. Its subcellular location is the secreted. Receptor for persephin (PSPN), a growth factor that exhibits neurotrophic activity on mesencephalic dopaminergic and motor neurons. Acts by binding to its coreceptor, GFRA4, leading to autophosphorylation and activation of the RET receptor. May be important in C-cell development and, in the postnatal development of the adrenal medulla. This is GDNF family receptor alpha-4 (Gfra4) from Mus musculus (Mouse).